The chain runs to 343 residues: Phospholipid phosphatase-related protein type 2 (343 aa).

A run of 3 helical transmembrane segments spans residues 12-32 (FSII…VVLL), 72-92 (ALIY…GELA), and 129-149 (FLGV…AGQV). Asn165 carries an N-linked (GlcNAc...) asparagine glycan. Helical transmembrane passes span 210–230 (AALC…VFRV), 239–259 (SLCL…VAEY), and 266–286 (VLAG…CVVH). The disordered stretch occupies residues 291-343 (RPHSGRRLSPWEDLSQAPTMDSPLEKNPRPAGRIRHRHGSPHPSRRTVPAVAT). Residues Ser299 and Ser312 each carry the phosphoserine modification. The span at 322–335 (GRIRHRHGSPHPSR) shows a compositional bias: basic residues.

This sequence belongs to the PA-phosphatase related phosphoesterase family.

It localises to the membrane. The polypeptide is Phospholipid phosphatase-related protein type 2 (Mus musculus (Mouse)).